Here is a 436-residue protein sequence, read N- to C-terminus: tRNA-2-methylthio-N(6)-dimethylallyladenosine synthase (436 aa).

The 117-residue stretch at 5 to 121 folds into the MTTase N-terminal domain; that stretch reads RKLFIKTYGC…LPDMLERTEG (117 aa). [4Fe-4S] cluster is bound by residues cysteine 14, cysteine 50, cysteine 84, cysteine 158, cysteine 162, and cysteine 165. The Radical SAM core domain occupies 144–373; that stretch reads ALRGPTAFLT…LGEQQRAAQA (230 aa). Residues 373 to 435 form the TRAM domain; the sequence is AAMVGRELGV…PNSLAGERIG (63 aa).

The protein belongs to the methylthiotransferase family. MiaB subfamily. As to quaternary structure, monomer. Requires [4Fe-4S] cluster as cofactor.

Its subcellular location is the cytoplasm. The catalysed reaction is N(6)-dimethylallyladenosine(37) in tRNA + (sulfur carrier)-SH + AH2 + 2 S-adenosyl-L-methionine = 2-methylsulfanyl-N(6)-dimethylallyladenosine(37) in tRNA + (sulfur carrier)-H + 5'-deoxyadenosine + L-methionine + A + S-adenosyl-L-homocysteine + 2 H(+). Functionally, catalyzes the methylthiolation of N6-(dimethylallyl)adenosine (i(6)A), leading to the formation of 2-methylthio-N6-(dimethylallyl)adenosine (ms(2)i(6)A) at position 37 in tRNAs that read codons beginning with uridine. The polypeptide is tRNA-2-methylthio-N(6)-dimethylallyladenosine synthase (Cereibacter sphaeroides (strain ATCC 17025 / ATH 2.4.3) (Rhodobacter sphaeroides)).